A 92-amino-acid polypeptide reads, in one-letter code: Small ribosomal subunit protein uS19c (92 aa).

This sequence belongs to the universal ribosomal protein uS19 family.

Its subcellular location is the plastid. The protein resides in the chloroplast. Functionally, protein S19 forms a complex with S13 that binds strongly to the 16S ribosomal RNA. This chain is Small ribosomal subunit protein uS19c, found in Psilotum nudum (Whisk fern).